The primary structure comprises 561 residues: Asparagine synthetase [glutamine-hydrolyzing] (561 aa).

Cys2 acts as the For GATase activity in catalysis. Residues 2–191 (CGIWALFGSD…PGHYEVLDLK (190 aa)) enclose the Glutamine amidotransferase type-2 domain. L-glutamine-binding positions include 49-53 (RLAVV), 75-77 (NGE), and Asp97. In terms of domain architecture, Asparagine synthetase spans 213 to 536 (HAACDTVGNL…PGRSSWLPHY (324 aa)). ATP-binding positions include Leu256, Ile288, and 363–364 (SG).

It carries out the reaction L-aspartate + L-glutamine + ATP + H2O = L-asparagine + L-glutamate + AMP + diphosphate + H(+). It participates in amino-acid biosynthesis; L-asparagine biosynthesis; L-asparagine from L-aspartate (L-Gln route): step 1/1. The polypeptide is Asparagine synthetase [glutamine-hydrolyzing] (ASNS) (Gallus gallus (Chicken)).